Reading from the N-terminus, the 619-residue chain is 1-deoxy-D-xylulose-5-phosphate synthase (619 aa).

Residues His-80 and 121–123 (GHS) contribute to the thiamine diphosphate site. Asp-152 contributes to the Mg(2+) binding site. Thiamine diphosphate contacts are provided by residues 153–154 (GA), Asn-181, Tyr-288, and Glu-370. Asn-181 provides a ligand contact to Mg(2+).

Belongs to the transketolase family. DXPS subfamily. In terms of assembly, homodimer. Requires Mg(2+) as cofactor. The cofactor is thiamine diphosphate.

The enzyme catalyses D-glyceraldehyde 3-phosphate + pyruvate + H(+) = 1-deoxy-D-xylulose 5-phosphate + CO2. Its pathway is metabolic intermediate biosynthesis; 1-deoxy-D-xylulose 5-phosphate biosynthesis; 1-deoxy-D-xylulose 5-phosphate from D-glyceraldehyde 3-phosphate and pyruvate: step 1/1. In terms of biological role, catalyzes the acyloin condensation reaction between C atoms 2 and 3 of pyruvate and glyceraldehyde 3-phosphate to yield 1-deoxy-D-xylulose-5-phosphate (DXP). The polypeptide is 1-deoxy-D-xylulose-5-phosphate synthase (Yersinia pseudotuberculosis serotype O:3 (strain YPIII)).